Here is a 62-residue protein sequence, read N- to C-terminus: MGPMKVLLVLLVVMVAAPHIADAWQQPSCSSICDYSCGKSACISYSGRCGCCASCRRGPIYG.

The first 23 residues, 1-23, serve as a signal peptide directing secretion; sequence MGPMKVLLVLLVVMVAAPHIADA. Disulfide bonds link C29-C55, C33-C51, C37-C49, and C42-C52. Residue Y61 is modified to Tyrosine amide; partial.

It belongs to the paralithocin family. Post-translationally, the amidated form is probably the active form.

Has weak antibacterial activity, mainly against marine Gram-positive bacteria like C.maltaromaticum (MIC=200 uM), C.mobile (MIC=100 uM), C.divergens (MIC=200 uM) and C.funditum (MIC=200 uM) but also against C.glutamicum (MIC=50 uM). Has very little or no activity against Gram-negative bacteria. This is Paralithocin 1 from Paralithodes camtschaticus (Red king crab).